Consider the following 236-residue polypeptide: uncharacterized protein (236 aa).

A DPCK domain is found at 3–208; it reads ILGLTGSIAT…PSYFFTLLCL (206 aa). 8–15 contributes to the ATP binding site; it reads GSIATGKS. Phosphoserine occurs at positions 82 and 86.

The protein belongs to the CoaE family.

Its subcellular location is the cytoplasm. This is an uncharacterized protein from Schizosaccharomyces pombe (strain 972 / ATCC 24843) (Fission yeast).